Consider the following 336-residue polypeptide: MFRLDELVERLGGELLGDPATAVRRVATLEQAGEGDLAFLANPKYQSRLAACGASAVILAPAARDLTGLPRIVTADPYIYFARVAQLFNPPEAFVPGVHPAASVASPVPASVTIAAGASIDVDVELGEHVVIGPGCRIGRGARIGAGSRLNANVTIYHDCVLGRDCIVHAGAVIGADGFGFARERDGSWVKIPQVGRVVIGDDVEIGANTTIDRGALDDTVISGGVKLDNQIQIGHNVRIGAHTAIAGCVGIAGSTTIGARCMIGGQAGIIGHLEIVDDVVVSAGTLVTKSIRRPGVYTANLPVQGHAEWVKNFAHLRHLDALVDRIRALEERKAR.

Histidine 236 (proton acceptor) is an active-site residue.

The protein belongs to the transferase hexapeptide repeat family. LpxD subfamily. As to quaternary structure, homotrimer.

The catalysed reaction is a UDP-3-O-[(3R)-3-hydroxyacyl]-alpha-D-glucosamine + a (3R)-hydroxyacyl-[ACP] = a UDP-2-N,3-O-bis[(3R)-3-hydroxyacyl]-alpha-D-glucosamine + holo-[ACP] + H(+). It participates in bacterial outer membrane biogenesis; LPS lipid A biosynthesis. In terms of biological role, catalyzes the N-acylation of UDP-3-O-acylglucosamine using 3-hydroxyacyl-ACP as the acyl donor. Is involved in the biosynthesis of lipid A, a phosphorylated glycolipid that anchors the lipopolysaccharide to the outer membrane of the cell. The polypeptide is UDP-3-O-acylglucosamine N-acyltransferase (Aromatoleum aromaticum (strain DSM 19018 / LMG 30748 / EbN1) (Azoarcus sp. (strain EbN1))).